Consider the following 435-residue polypeptide: Probable tRNA pseudouridine synthase D (435 aa).

The active-site Nucleophile is D95. One can recognise a TRUD domain in the interval 170–396; it reads GVPNYFGTQR…SSGTRRAVLV (227 aa).

This sequence belongs to the pseudouridine synthase TruD family.

The enzyme catalyses uridine(13) in tRNA = pseudouridine(13) in tRNA. In terms of biological role, could be responsible for synthesis of pseudouridine from uracil-13 in transfer RNAs. In Natronomonas pharaonis (strain ATCC 35678 / DSM 2160 / CIP 103997 / JCM 8858 / NBRC 14720 / NCIMB 2260 / Gabara) (Halobacterium pharaonis), this protein is Probable tRNA pseudouridine synthase D.